A 301-amino-acid polypeptide reads, in one-letter code: NAD kinase (301 aa).

Catalysis depends on Asp-81, which acts as the Proton acceptor. Residues 81–82 (DG), 155–156 (NE), His-166, Arg-183, Asp-185, 196–201 (TAYSLS), and Gln-256 each bind NAD(+).

It belongs to the NAD kinase family. A divalent metal cation serves as cofactor.

It localises to the cytoplasm. It catalyses the reaction NAD(+) + ATP = ADP + NADP(+) + H(+). Its function is as follows. Involved in the regulation of the intracellular balance of NAD and NADP, and is a key enzyme in the biosynthesis of NADP. Catalyzes specifically the phosphorylation on 2'-hydroxyl of the adenosine moiety of NAD to yield NADP. The protein is NAD kinase of Mannheimia succiniciproducens (strain KCTC 0769BP / MBEL55E).